The primary structure comprises 299 residues: Lipoyl synthase 2 (299 aa).

Residues Cys-45, Cys-50, Cys-56, Cys-71, Cys-75, Cys-78, and Ser-295 each contribute to the [4Fe-4S] cluster site. Positions 57–284 (YASGTATFLL…KSFCSKLGFK (228 aa)) constitute a Radical SAM core domain.

The protein belongs to the radical SAM superfamily. Lipoyl synthase family. [4Fe-4S] cluster is required as a cofactor.

It is found in the cytoplasm. It carries out the reaction [[Fe-S] cluster scaffold protein carrying a second [4Fe-4S](2+) cluster] + N(6)-octanoyl-L-lysyl-[protein] + 2 oxidized [2Fe-2S]-[ferredoxin] + 2 S-adenosyl-L-methionine + 4 H(+) = [[Fe-S] cluster scaffold protein] + N(6)-[(R)-dihydrolipoyl]-L-lysyl-[protein] + 4 Fe(3+) + 2 hydrogen sulfide + 2 5'-deoxyadenosine + 2 L-methionine + 2 reduced [2Fe-2S]-[ferredoxin]. It participates in protein modification; protein lipoylation via endogenous pathway; protein N(6)-(lipoyl)lysine from octanoyl-[acyl-carrier-protein]: step 2/2. In terms of biological role, catalyzes the radical-mediated insertion of two sulfur atoms into the C-6 and C-8 positions of the octanoyl moiety bound to the lipoyl domains of lipoate-dependent enzymes, thereby converting the octanoylated domains into lipoylated derivatives. This is Lipoyl synthase 2 from Prochlorococcus marinus subsp. pastoris (strain CCMP1986 / NIES-2087 / MED4).